Reading from the N-terminus, the 488-residue chain is BRAP2 RING ZnF UBP domain-containing protein 1 (488 aa).

The segment at 174–214 (CPICLERLDPDTSGIVSTLCDHSFQCSCTSKWTYLSCQVCR) adopts an RING-type; degenerate zinc-finger fold. The UBP-type; degenerate zinc finger occupies 208–301 (LSCQVCRLCQ…GKSVEMSTSC (94 aa)). Residues C225, C228, C237, C240, C245, H252, H256, and H262 each coordinate Zn(2+). Residues 370–418 (EQIVVNTMQELQNKIEKCEEEKSGITEVNTKLIKEQDTWRKKAKEIEER) are a coiled coil. The disordered stretch occupies residues 453-488 (MSSDTDGIREGTVLPVPISPEPVSSVRRQKKSNRRK). The segment covering 465 to 478 (VLPVPISPEPVSSV) has biased composition (low complexity). The span at 479-488 (RRQKKSNRRK) shows a compositional bias: basic residues.

In terms of assembly, component of the heteromeric E3 ligase complex made of BRIZ1 and BRIZ2. Forms heterooligomers with BRIZ2 via coiled-coil domains.

The catalysed reaction is S-ubiquitinyl-[E2 ubiquitin-conjugating enzyme]-L-cysteine + [acceptor protein]-L-lysine = [E2 ubiquitin-conjugating enzyme]-L-cysteine + N(6)-ubiquitinyl-[acceptor protein]-L-lysine.. It functions in the pathway protein modification; protein ubiquitination. In terms of biological role, RING-type ubiquitin E3 ligase required for seed germination and post-germination growth. The chain is BRAP2 RING ZnF UBP domain-containing protein 1 from Arabidopsis thaliana (Mouse-ear cress).